We begin with the raw amino-acid sequence, 287 residues long: Bifunctional protein FolD (287 aa).

NADP(+)-binding positions include 166-168 and Ile232; that span reads GAS.

The protein belongs to the tetrahydrofolate dehydrogenase/cyclohydrolase family. As to quaternary structure, homodimer.

It carries out the reaction (6R)-5,10-methylene-5,6,7,8-tetrahydrofolate + NADP(+) = (6R)-5,10-methenyltetrahydrofolate + NADPH. The catalysed reaction is (6R)-5,10-methenyltetrahydrofolate + H2O = (6R)-10-formyltetrahydrofolate + H(+). It participates in one-carbon metabolism; tetrahydrofolate interconversion. Functionally, catalyzes the oxidation of 5,10-methylenetetrahydrofolate to 5,10-methenyltetrahydrofolate and then the hydrolysis of 5,10-methenyltetrahydrofolate to 10-formyltetrahydrofolate. The sequence is that of Bifunctional protein FolD from Aeromonas hydrophila subsp. hydrophila (strain ATCC 7966 / DSM 30187 / BCRC 13018 / CCUG 14551 / JCM 1027 / KCTC 2358 / NCIMB 9240 / NCTC 8049).